Reading from the N-terminus, the 572-residue chain is Probable inactive glycosyltransferase 25 family member 3 (572 aa).

Residues asparagine 52, asparagine 130, asparagine 214, and asparagine 337 are each glycosylated (N-linked (GlcNAc...) asparagine). The short motif at 569 to 572 (RDEL) is the Prevents secretion from ER element.

This sequence belongs to the glycosyltransferase 25 family.

It is found in the endoplasmic reticulum lumen. Functionally, probable cell adhesion protein involved in leukocyte transmigration across the blood-brain barrier. Does not express any beta-galactosyltransferase activity in vitro. This is Probable inactive glycosyltransferase 25 family member 3 (Cercam) from Rattus norvegicus (Rat).